A 154-amino-acid polypeptide reads, in one-letter code: Nascent polypeptide-associated complex subunit beta (154 aa).

Residues 33–98 (EQDDTKLIEA…PQEKNVTQLI (66 aa)) enclose the NAC-A/B domain. The segment at 125–154 (APTELNAGAPAGGDEGIPDLIDGEKFDEVE) is disordered.

This sequence belongs to the NAC-beta family. As to quaternary structure, part of the nascent polypeptide-associated complex (NAC), consisting of EGD2 and EGD1. NAC associates with ribosomes via EGD1.

It localises to the cytoplasm. It is found in the nucleus. Functionally, component of the nascent polypeptide-associated complex (NAC), a dynamic component of the ribosomal exit tunnel, protecting the emerging polypeptides from interaction with other cytoplasmic proteins to ensure appropriate nascent protein targeting. The NAC complex also promotes mitochondrial protein import by enhancing productive ribosome interactions with the outer mitochondrial membrane and blocks the inappropriate interaction of ribosomes translating non-secretory nascent polypeptides with translocation sites in the membrane of the endoplasmic reticulum. EGD1 may act as a transcription factor that exert a negative effect on the expression of several genes that are transcribed by RNA polymerase II. This is Nascent polypeptide-associated complex subunit beta (EGD1) from Scheffersomyces stipitis (strain ATCC 58785 / CBS 6054 / NBRC 10063 / NRRL Y-11545) (Yeast).